We begin with the raw amino-acid sequence, 43 residues long: Protein PsbN (43 aa).

The chain crosses the membrane as a helical span at residues A5 to F27.

The protein belongs to the PsbN family.

It localises to the plastid. Its subcellular location is the chloroplast thylakoid membrane. Its function is as follows. May play a role in photosystem I and II biogenesis. The chain is Protein PsbN from Bowenia serrulata (Byfield fern).